Here is a 259-residue protein sequence, read N- to C-terminus: (3R)-3-hydroxyacyl-CoA dehydrogenase (259 aa).

NAD(+) is bound by residues 13 to 21 (LVTGAGSGI) and 40 to 41 (DL). Serine 58 is subject to Phosphoserine. Position 66 is an N6-acetyllysine (lysine 66). 72-74 (ADV) serves as a coordination point for NAD(+). Serine 154 is a binding site for substrate. The residue at position 158 (lysine 158) is an N6-succinyllysine. Catalysis depends on tyrosine 167, which acts as the Proton acceptor. Residues 167–171 (YASSK) and 200–202 (IAT) each bind NAD(+). Lysine 171 carries the post-translational modification N6-succinyllysine.

This sequence belongs to the short-chain dehydrogenases/reductases (SDR) family. Heterotetramer with CBR4; contains two molecules of HSD17B8 and CBR4. In terms of tissue distribution, expressed in ovary at protein level.

The protein localises to the mitochondrion matrix. It carries out the reaction a (3R)-3-hydroxyacyl-CoA + NAD(+) = a 3-oxoacyl-CoA + NADH + H(+). It catalyses the reaction 17beta-estradiol + NAD(+) = estrone + NADH + H(+). The enzyme catalyses testosterone + NAD(+) = androst-4-ene-3,17-dione + NADH + H(+). The catalysed reaction is 17beta-hydroxy-5alpha-androstan-3-one + NAD(+) = 5alpha-androstan-3,17-dione + NADH + H(+). It functions in the pathway steroid biosynthesis; estrogen biosynthesis. The protein operates within lipid metabolism; fatty acid biosynthesis. Its pathway is lipid metabolism; mitochondrial fatty acid beta-oxidation. In terms of biological role, required for the solubility and assembly of the heterotetramer 3-ketoacyl-[acyl carrier protein] (ACP) reductase functional complex (KAR or KAR1) that forms part of the mitochondrial fatty acid synthase (mtFAS). Alpha-subunit of the KAR complex that acts as scaffold protein required for the stability of carbonyl reductase type-4 (CBR4, beta-subunit of the KAR complex) and for its 3-ketoacyl-ACP reductase activity, thereby participating in mitochondrial fatty acid biosynthesis. Catalyzes the NAD-dependent conversion of (3R)-3-hydroxyacyl-CoA into 3-ketoacyl-CoA (3-oxoacyl-CoA) with no chain length preference; this enzymatic activity is not needed for the KAR function. Prefers (3R)-3-hydroxyacyl-CoA over (3S)-3-hydroxyacyl-CoA and displays enzymatic activity only in the presence of NAD(+). Cooperates with enoyl-CoA hydratase 1 in mitochondria, together they constitute an alternative route to the auxiliary enzyme pathways for the breakdown of Z-PUFA (cis polyunsaturated fatty acid) enoyl-esters. NAD-dependent 17-beta-hydroxysteroid dehydrogenase with highest activity towards estradiol (17beta-estradiol or E2). Has very low activity towards testosterone and dihydrotestosterone (17beta-hydroxy-5alpha-androstan-3-one). Primarily an oxidative enzyme, it can switch to a reductive mode determined in the appropriate physiologic milieu and catalyze the reduction of estrone (E1) to form biologically active 17beta-estradiol. The chain is (3R)-3-hydroxyacyl-CoA dehydrogenase (Hsd17b8) from Rattus norvegicus (Rat).